A 278-amino-acid polypeptide reads, in one-letter code: 1-acyl-sn-glycerol-3-phosphate acyltransferase beta (278 aa).

A signal peptide spans 1-23; that stretch reads MDPWPWLTAALLLLLLLVQLSRT. Residues 24-29 are Lumenal-facing; sequence ARFYAK. A helical transmembrane segment spans residues 30–50; it reads VGLYCVLCLSFSAAASIVCLL. Residues 51–121 lie on the Cytoplasmic side of the membrane; that stretch reads RHGGRTVDNM…PKRCVQIAKR (71 aa). Residues 98–103 carry the HXXXXD motif motif; it reads HQSILD. A helical transmembrane segment spans residues 122-142; the sequence is ELMFTGPVGLIMYLGGVYFIN. Residues 143-278 lie on the Lumenal side of the membrane; sequence RQQARTAMSV…IKEPGVLPAQ (136 aa). An EGTR motif motif is present at residues 172–175; sequence EGTR.

Belongs to the 1-acyl-sn-glycerol-3-phosphate acyltransferase family. Expressed at high levels in the liver, at intermediate levels in the kidney, gut, heart and skeletal muscles. Undetectable in brain and spleen.

It is found in the endoplasmic reticulum membrane. It catalyses the reaction a 1-acyl-sn-glycero-3-phosphate + an acyl-CoA = a 1,2-diacyl-sn-glycero-3-phosphate + CoA. It carries out the reaction 1-(9Z-octadecenoyl)-sn-glycero-3-phosphate + (9Z)-octadecenoyl-CoA = 1,2-di-(9Z-octadecenoyl)-sn-glycero-3-phosphate + CoA. The enzyme catalyses 1-(9Z-octadecenoyl)-sn-glycero-3-phosphate + hexadecanoyl-CoA = 1-(9Z)-octadecenoyl-2-hexadecanoyl-sn-glycero-3-phosphate + CoA. The catalysed reaction is heptadecanoyl-CoA + 1-(9Z-octadecenoyl)-sn-glycero-3-phosphate = 1-(9Z)-octadecenoyl-2-heptadecanoyl-sn-glycero-3-phosphate + CoA. It catalyses the reaction 1-(9Z-octadecenoyl)-sn-glycero-3-phosphate + (9Z,12Z)-octadecadienoyl-CoA = 1-(9Z)-octadecenoyl-2-(9Z,12Z)-octadecadienoyl-sn-glycero-3-phosphate + CoA. It carries out the reaction 1-(9Z-octadecenoyl)-sn-glycero-3-phosphate + tetradecanoyl-CoA = 1-(9Z)-octadecenoyl-2-tetradecanoyl-sn-glycero-3-phosphate + CoA. The enzyme catalyses pentadecanoyl-CoA + 1-(9Z-octadecenoyl)-sn-glycero-3-phosphate = 1-(9Z)-octadecenoyl-2-pentadecanoyl-sn-glycero-3-phosphate + CoA. The catalysed reaction is 1-hexadecanoyl-sn-glycero-3-phosphate + (9Z)-octadecenoyl-CoA = 1-hexadecanoyl-2-(9Z-octadecenoyl)-sn-glycero-3-phosphate + CoA. It catalyses the reaction 1-tetradecanoyl-sn-glycerol 3-phosphate + (9Z)-octadecenoyl-CoA = 1-tetradecanoyl-2-(9Z)-octadecenoyl-sn-glycero-3-phosphate + CoA. It carries out the reaction 1-(9Z,12Z,15Z)-octadecatrienoyl-sn-glycero-3-phosphate + (9Z)-octadecenoyl-CoA = 1-(9Z,12Z,15Z)-octadecatrienoyl-2-(9Z)-octadecenoyl-sn-glycero-3-phosphate + CoA. The enzyme catalyses 1-(6Z,9Z,12Z-octadecatrienoyl)-sn-glycero-3-phosphate + (9Z)-octadecenoyl-CoA = (6Z,9Z,12Z)-octadecatrienoyl-2-(9Z)-octadecenoyl-sn-glycero-3-phosphate + CoA. The catalysed reaction is 1-eicosanoyl-sn-glycero-3-phosphate + (9Z)-octadecenoyl-CoA = 1-eicosanoyl-2-(9Z)-octadecenoyl-sn-glycero-3-phosphate + CoA. It catalyses the reaction 1-hexadecanoyl-sn-glycero-3-phosphate + octadecanoyl-CoA = 1-hexadecanoyl-2-octadecanoyl-sn-glycero-3-phosphate + CoA. It carries out the reaction 1-hexadecanoyl-sn-glycero-3-phosphate + (5Z,8Z,11Z,14Z)-eicosatetraenoyl-CoA = 1-hexadecanoyl-2-(5Z,8Z,11Z,14Z-eicosatetraenoyl)-sn-glycero-3-phosphate + CoA. The enzyme catalyses 1-hexadecanoyl-sn-glycero-3-phosphate + hexadecanoyl-CoA = 1,2-dihexadecanoyl-sn-glycero-3-phosphate + CoA. The catalysed reaction is 1-hexadecanoyl-sn-glycero-3-phosphate + tetradecanoyl-CoA = 1-hexadecanoyl-2-tetradecanoyl-sn-glycero-3-phosphate + CoA. It catalyses the reaction (11Z)-octadecenoyl-CoA + 1-(9Z-octadecenoyl)-sn-glycero-3-phosphate = 1-(9Z)-octadecenoyl-2-(11Z)-octadecenoyl-sn-glycero-3-phosphate + CoA. It participates in phospholipid metabolism; CDP-diacylglycerol biosynthesis; CDP-diacylglycerol from sn-glycerol 3-phosphate: step 2/3. In terms of biological role, converts 1-acyl-sn-glycerol-3-phosphate (lysophosphatidic acid or LPA) into 1,2-diacyl-sn-glycerol-3-phosphate (phosphatidic acid or PA) by incorporating an acyl moiety at the sn-2 position of the glycerol backbone. The polypeptide is 1-acyl-sn-glycerol-3-phosphate acyltransferase beta (Agpat2) (Mus musculus (Mouse)).